The following is a 504-amino-acid chain: Tyrosine-protein kinase HCK (504 aa).

A lipid anchor (N-myristoyl glycine) is attached at Gly-2. Residue Cys-3 is the site of S-palmitoyl cysteine attachment. Position 15 is a phosphothreonine (Thr-15). The residue at position 30 (Tyr-30) is a Phosphotyrosine. Positions 34–49 (PTSTIKPGPNSNNRNT) are enriched in polar residues. Residues 34-53 (PTSTIKPGPNSNNRNTPGIG) are disordered. The SH3 domain maps to 56 to 116 (SEDIIVVALY…PSNYVARVDS (61 aa)). The SH2 domain maps to 122–219 (WFFKGISRKD…GLCQKLSVPC (98 aa)). The residue at position 180 (Thr-180) is a Phosphothreonine. At Tyr-187 the chain carries Phosphotyrosine. A Protein kinase domain is found at 240–493 (LKLEKKLGAG…YIQSVLDDFY (254 aa)). ATP is bound by residues 246-254 (LGAGQFGEV) and Lys-268. Residue Asp-359 is the Proton acceptor of the active site. Tyr-389 bears the Phosphotyrosine; by autocatalysis mark. Residue Ser-440 is modified to Phosphoserine. The residue at position 500 (Tyr-500) is a Phosphotyrosine.

This sequence belongs to the protein kinase superfamily. Tyr protein kinase family. SRC subfamily. As to quaternary structure, interacts with ADAM15. Interacts with FASLG. Interacts with ARRB1 and ARRB2. Interacts with FCGR1A; the interaction may be indirect. Interacts with IL6ST. Interacts (via SH3 domain) with ELMO1. Interacts (via SH3 domain) with TP73. Interacts with YAP1. Interacts with ABL1 and ITGB1, and thereby recruits ABL1 to activated ITGB1. Interacts (via SH2 domain) with FLT3 (tyrosine phosphorylated). Interacts with CBL. Interacts with VAV1, WAS and RAPGEF1. Interacts (via SH3 domain) with WDCP. Phosphorylated on several tyrosine residues. Autophosphorylated. Becomes rapidly phosphorylated upon activation of the immunoglobulin receptors FCGR1A and FCGR2A. Phosphorylation at Tyr-389 increases kinase activity. Phosphorylation at Tyr-500 inhibits kinase activity. Kinase activity is not required for phosphorylation at Tyr-500, suggesting that this site may be a target of other kinases. In terms of processing, ubiquitinated by CBL, leading to its degradation via the proteasome. Post-translationally, palmitoylation requires prior myristoylation. Palmitoylation is required for caveolar localization.

It is found in the cytoplasmic vesicle. It localises to the secretory vesicle. Its subcellular location is the cytoplasm. The protein localises to the cytosol. The protein resides in the cell membrane. It is found in the membrane. It localises to the caveola. Its subcellular location is the cell junction. The protein localises to the focal adhesion. The protein resides in the cytoskeleton. It is found in the golgi apparatus. It localises to the lysosome. Its subcellular location is the nucleus. It catalyses the reaction L-tyrosyl-[protein] + ATP = O-phospho-L-tyrosyl-[protein] + ADP + H(+). With respect to regulation, subject to autoinhibition, mediated by intramolecular interactions involving the SH2 and SH3 domains. Kinase activity is also regulated by phosphorylation at regulatory tyrosine residues. Phosphorylation at Tyr-389 is required for optimal activity. Phosphorylation at Tyr-500 inhibits kinase activity. In terms of biological role, non-receptor tyrosine-protein kinase found in hematopoietic cells that transmits signals from cell surface receptors and plays an important role in the regulation of innate immune responses, including neutrophil, monocyte, macrophage and mast cell functions, phagocytosis, cell survival and proliferation, cell adhesion and migration. Acts downstream of receptors that bind the Fc region of immunoglobulins, such as FCGR1A and FCGR2A, but also CSF3R, PLAUR, the receptors for IFNG, IL2, IL6 and IL8, and integrins, such as ITGB1 and ITGB2. During the phagocytic process, mediates mobilization of secretory lysosomes, degranulation, and activation of NADPH oxidase to bring about the respiratory burst. Plays a role in the release of inflammatory molecules. Promotes reorganization of the actin cytoskeleton and actin polymerization, formation of podosomes and cell protrusions. Inhibits TP73-mediated transcription activation and TP73-mediated apoptosis. Phosphorylates CBL in response to activation of immunoglobulin gamma Fc region receptors. Phosphorylates ADAM15, BCR, ELMO1, FCGR2A, GAB1, GAB2, RAPGEF1, STAT5B, TP73, VAV1 and WAS. The protein is Tyrosine-protein kinase HCK (HCK) of Macaca fascicularis (Crab-eating macaque).